Consider the following 620-residue polypeptide: Dihydroxy-acid dehydratase (620 aa).

Mg(2+) is bound at residue aspartate 82. Residue cysteine 123 coordinates [2Fe-2S] cluster. Residues aspartate 124 and lysine 125 each contribute to the Mg(2+) site. Lysine 125 carries the N6-carboxylysine modification. Cysteine 197 lines the [2Fe-2S] cluster pocket. A Mg(2+)-binding site is contributed by glutamate 493. Serine 519 (proton acceptor) is an active-site residue.

Belongs to the IlvD/Edd family. Homodimer. [2Fe-2S] cluster is required as a cofactor. It depends on Mg(2+) as a cofactor.

The enzyme catalyses (2R)-2,3-dihydroxy-3-methylbutanoate = 3-methyl-2-oxobutanoate + H2O. The catalysed reaction is (2R,3R)-2,3-dihydroxy-3-methylpentanoate = (S)-3-methyl-2-oxopentanoate + H2O. Its pathway is amino-acid biosynthesis; L-isoleucine biosynthesis; L-isoleucine from 2-oxobutanoate: step 3/4. It functions in the pathway amino-acid biosynthesis; L-valine biosynthesis; L-valine from pyruvate: step 3/4. Functionally, functions in the biosynthesis of branched-chain amino acids. Catalyzes the dehydration of (2R,3R)-2,3-dihydroxy-3-methylpentanoate (2,3-dihydroxy-3-methylvalerate) into 2-oxo-3-methylpentanoate (2-oxo-3-methylvalerate) and of (2R)-2,3-dihydroxy-3-methylbutanoate (2,3-dihydroxyisovalerate) into 2-oxo-3-methylbutanoate (2-oxoisovalerate), the penultimate precursor to L-isoleucine and L-valine, respectively. The protein is Dihydroxy-acid dehydratase of Bifidobacterium longum subsp. infantis (strain ATCC 15697 / DSM 20088 / JCM 1222 / NCTC 11817 / S12).